A 316-amino-acid polypeptide reads, in one-letter code: Adenine deaminase (316 aa).

Residues H14, H16, and H194 each coordinate Zn(2+). E197 (proton donor) is an active-site residue. D275 lines the Zn(2+) pocket. Substrate is bound at residue D276.

It belongs to the metallo-dependent hydrolases superfamily. Adenosine and AMP deaminases family. Adenine deaminase type 2 subfamily. Zn(2+) is required as a cofactor.

It carries out the reaction adenine + H2O + H(+) = hypoxanthine + NH4(+). In terms of biological role, catalyzes the hydrolytic deamination of adenine to hypoxanthine. Plays an important role in the purine salvage pathway and in nitrogen catabolism. The polypeptide is Adenine deaminase (Bordetella avium (strain 197N)).